We begin with the raw amino-acid sequence, 362 residues long: Carbamoyl phosphate synthase pyrimidine-specific small chain (362 aa).

A CPSase region spans residues M1–P168. L-glutamine is bound by residues S45, G219, and G221. Positions R171–R358 constitute a Glutamine amidotransferase type-1 domain. C246 functions as the Nucleophile in the catalytic mechanism. Residues L247, Q250, N288, G290, and Y291 each coordinate L-glutamine. Residues H331 and E333 contribute to the active site.

Belongs to the CarA family. In terms of assembly, composed of two chains; the small (or glutamine) chain promotes the hydrolysis of glutamine to ammonia, which is used by the large (or ammonia) chain to synthesize carbamoyl phosphate. Tetramer of heterodimers (alpha,beta)4.

The catalysed reaction is hydrogencarbonate + L-glutamine + 2 ATP + H2O = carbamoyl phosphate + L-glutamate + 2 ADP + phosphate + 2 H(+). The enzyme catalyses L-glutamine + H2O = L-glutamate + NH4(+). It functions in the pathway pyrimidine metabolism; UMP biosynthesis via de novo pathway; (S)-dihydroorotate from bicarbonate: step 1/3. In terms of biological role, small subunit of the glutamine-dependent carbamoyl phosphate synthetase (CPSase). CPSase catalyzes the formation of carbamoyl phosphate from the ammonia moiety of glutamine, carbonate, and phosphate donated by ATP, constituting the first step of the biosynthetic pathway leading to pyrimidine nucleotides. The small subunit (glutamine amidotransferase) binds and cleaves glutamine to supply the large subunit with the substrate ammonia. This chain is Carbamoyl phosphate synthase pyrimidine-specific small chain, found in Halalkalibacterium halodurans (strain ATCC BAA-125 / DSM 18197 / FERM 7344 / JCM 9153 / C-125) (Bacillus halodurans).